An 828-amino-acid chain; its full sequence is G-type lectin S-receptor-like serine/threonine-protein kinase At2g19130 (828 aa).

The signal sequence occupies residues methionine 1 to alanine 22. In terms of domain architecture, Bulb-type lectin spans valine 23–tryptophan 146. The Extracellular portion of the chain corresponds to valine 23 to glycine 439. 6 N-linked (GlcNAc...) asparagine glycosylation sites follow: asparagine 85, asparagine 113, asparagine 203, asparagine 234, asparagine 240, and asparagine 255. The region spanning proline 286–lysine 322 is the EGF-like domain. Intrachain disulfides connect cysteine 290–cysteine 302, cysteine 296–cysteine 310, cysteine 372–cysteine 394, and cysteine 376–cysteine 382. A PAN domain is found at cysteine 341–alanine 422. The helical transmembrane segment at leucine 440–isoleucine 460 threads the bilayer. Topologically, residues leucine 461 to alanine 828 are cytoplasmic. The region spanning lysine 493–leucine 770 is the Protein kinase domain. Residues leucine 499 to valine 507 and lysine 521 each bind ATP. At serine 527 the chain carries Phosphoserine. The interval valine 582–threonine 600 is caM-binding. Aspartate 619 (proton acceptor) is an active-site residue. Threonine 653 is subject to Phosphothreonine. Residues glutamate 796–alanine 828 form a disordered region. Over residues serine 797–alanine 828 the composition is skewed to low complexity. At serine 815 the chain carries Phosphoserine.

It belongs to the protein kinase superfamily. Ser/Thr protein kinase family.

It localises to the cell membrane. It carries out the reaction L-seryl-[protein] + ATP = O-phospho-L-seryl-[protein] + ADP + H(+). The catalysed reaction is L-threonyl-[protein] + ATP = O-phospho-L-threonyl-[protein] + ADP + H(+). This Arabidopsis thaliana (Mouse-ear cress) protein is G-type lectin S-receptor-like serine/threonine-protein kinase At2g19130.